The sequence spans 375 residues: Putative F-box/kelch-repeat protein At3g24610 (375 aa).

A disordered region spans residues 1–27 (MSNEAPEVEPHSKRRKKEASPSSSSGF). In terms of domain architecture, F-box spans 25 to 71 (SGFLQSLPEAVAMICLARVSRLDHAALSLVSKSCRSMVLSPELYQTR). The stretch at 138-183 (KINVWGGCKYKHYYDWGEVFDPKTQTWADMSIPKPVREEKIYVVDS) is one Kelch repeat.

The chain is Putative F-box/kelch-repeat protein At3g24610 from Arabidopsis thaliana (Mouse-ear cress).